Reading from the N-terminus, the 1935-residue chain is Myosin-7 (1935 aa).

The Myosin N-terminal SH3-like domain maps to 32–81 (DLKKDVFVPDDKEEFVKAKIISREGGKITAETEHGKTVTVKEDQVLQQNP). Residues 85–778 (DKIEDMAMLT…LLGLLEEMRD (694 aa)) form the Myosin motor domain. Lysine 129 carries the post-translational modification N6,N6,N6-trimethyllysine. 178-185 (GESGAGKT) lines the ATP pocket. Threonine 378 carries the post-translational modification Phosphothreonine. 2 actin-binding regions span residues 655 to 677 (LNKLMTNLRSTHPHFVRCIIPNE) and 757 to 771 (RFGHTKVFFKAGLLG). Residues 781-810 (LSRIITRIQAQSRGVLARMEFKKLLERRDS) form the IQ domain. The stretch at 839–1935 (LLKSAETEKE…DIGTKGLNEE (1097 aa)) forms a coiled coil. A phosphoserine mark is found at serine 1137 and serine 1269. At threonine 1282 the chain carries Phosphothreonine. Tyrosine 1308 is modified (phosphotyrosine). A Phosphothreonine modification is found at threonine 1309. Position 1510 is a phosphoserine (serine 1510). Threonine 1513 carries the phosphothreonine modification. The disordered stretch occupies residues 1907–1935 (EERADIAESQVNKLRAKSRDIGTKGLNEE). Basic and acidic residues predominate over residues 1923–1935 (KSRDIGTKGLNEE).

This sequence belongs to the TRAFAC class myosin-kinesin ATPase superfamily. Myosin family. As to quaternary structure, muscle myosin is a hexameric protein that consists of 2 heavy chain subunits (MHC), 2 alkali light chain subunits (MLC) and 2 regulatory light chain subunits (MLC-2). Interacts with ECPAS. Interacts (via C-terminus) with LRRC39.

It localises to the cytoplasm. The protein resides in the myofibril. It is found in the sarcomere. Its function is as follows. Myosins are actin-based motor molecules with ATPase activity essential for muscle contraction. Forms regular bipolar thick filaments that, together with actin thin filaments, constitute the fundamental contractile unit of skeletal and cardiac muscle. This chain is Myosin-7 (MYH7), found in Equus caballus (Horse).